A 184-amino-acid polypeptide reads, in one-letter code: Ethylene-responsive transcription factor ERF024 (184 aa).

Positions 1–21 are disordered; sequence MQGTSKDNGGRHPLYRGVRQR. The segment at residues 14–72 is a DNA-binding region (AP2/ERF); that stretch reads LYRGVRQRKNSNKWVSEIREPRKPNRIWLGTFSTPEMAAIAYDVAALALKGSQAELNFP.

Belongs to the AP2/ERF transcription factor family. ERF subfamily.

The protein resides in the nucleus. Functionally, probably acts as a transcriptional activator. Binds to the GCC-box pathogenesis-related promoter element. May be involved in the regulation of gene expression by stress factors and by components of stress signal transduction pathways. This is Ethylene-responsive transcription factor ERF024 (ERF024) from Arabidopsis thaliana (Mouse-ear cress).